We begin with the raw amino-acid sequence, 239 residues long: Interleukin-27 subunit alpha (239 aa).

The signal sequence occupies residues 1-28; it reads MGQMADDLGWRLSLLLLSLLLARAGVWG. Residue asparagine 89 is glycosylated (N-linked (GlcNAc...) asparagine). Positions 167 to 186 are disordered; it reads EEENEAGRELLPGAPGGPSK.

Belongs to the IL-6 superfamily. Heterodimer with EBI3; not disulfide-linked. This heterodimer is known as interleukin IL-27. In terms of processing, O-glycosylated.

The protein localises to the secreted. Associates with EBI3 to form the IL-27 interleukin, a heterodimeric cytokine which functions in innate immunity. Cytokine with pro- and anti-inflammatory properties, that can regulate T-helper cell development, suppress T-cell proliferation, stimulate cytotoxic T-cell activity, induce isotype switching in B-cells, and that has diverse effects on innate immune cells. Among its target cells are CD4 T-helper cells which can differentiate in type 1 effector cells (TH1), type 2 effector cells (TH2) and IL17 producing helper T-cells (TH17). It drives rapid clonal expansion of naive but not memory CD4 T-cells. It also strongly synergizes with IL-12 to trigger interferon-gamma/IFN-gamma production of naive CD4 T-cells, binds to the cytokine receptor WSX-1/TCCR which appears to be required but not sufficient for IL-27-mediated signal transduction. IL-27 potentiate the early phase of TH1 response and suppress TH2 and TH17 differentiation. It induces the differentiation of TH1 cells via two distinct pathways, p38 MAPK/TBX21- and ICAM1/ITGAL/ERK-dependent pathways. It also induces STAT1, STAT3, STAT4 and STAT5 phosphorylation and activates TBX21/T-Bet via STAT1 with resulting IL12RB2 up-regulation, an event crucial to TH1 cell commitment. It suppresses the expression of GATA3, the inhibitor TH1 cells development. In CD8 T-cells, it activates STATs as well as GZMB. IL-27 reveals to be a potent inhibitor of TH17 cell development and of IL-17 production. Indeed IL27 alone is also able to inhibit the production of IL17 by CD4 and CD8 T-cells. While IL-27 suppressed the development of pro-inflammatory Th17 cells via STAT1, it inhibits the development of anti-inflammatory inducible regulatory T-cells, iTreg, independently of STAT1. IL-27 also has an effect on cytokine production, it suppresses pro-inflammatory cytokine production such as IL2, IL4, IL5 and IL6 and activates suppressors of cytokine signaling such as SOCS1 and SOCS3. Apart from suppression of cytokine production, IL-27 also antagonizes the effects of some cytokines such as IL6 through direct effects on T-cells. Another important role of IL-27 is its antitumor activity as well as its antiangiogenic activity with activation of production of antiangiogenic chemokines such as IP-10/CXCL10 and MIG/CXCL9. In vein endothelial cells, it induces IRF1/interferon regulatory factor 1 and increase the expression of MHC class II transactivator/CIITA with resulting up-regulation of major histocompatibility complex class II. The chain is Interleukin-27 subunit alpha (IL27) from Sus scrofa (Pig).